The following is a 345-amino-acid chain: PI-PLC X domain-containing protein 1 (345 aa).

Positions 52-228 constitute a PI-PLC X-box domain; that stretch reads QLWDVPLHHL…QVIVSYEDEA (177 aa).

As to expression, expressed at highest levels in brain and kidney. Also detected in stomach, thymus and skeletal muscle.

Its subcellular location is the cytoplasm. The polypeptide is PI-PLC X domain-containing protein 1 (Plcxd1) (Mus musculus (Mouse)).